A 61-amino-acid chain; its full sequence is Alpha-conotoxin-like Lp1.6a (61 aa).

The first 21 residues, 1 to 21, serve as a signal peptide directing secretion; it reads MGMRMMFIIFLFVVLATTVVS. Positions 22–44 are excised as a propeptide; the sequence is FTSGRASDGRNAPANNKVSDLIR. Glutamine 45 carries the pyrrolidone carboxylic acid modification. 2 cysteine pairs are disulfide-bonded: cysteine 47–cysteine 53 and cysteine 48–cysteine 60. The residue at position 60 (cysteine 60) is a Cysteine amide.

It belongs to the conotoxin A superfamily. In terms of tissue distribution, expressed by the venom duct.

The protein localises to the secreted. Its function is as follows. Alpha-conotoxins act on postsynaptic membranes, they bind to the nicotinic acetylcholine receptors (nAChR) and thus inhibit them. In Conus leopardus (Leopard cone), this protein is Alpha-conotoxin-like Lp1.6a.